The chain runs to 355 residues: Probable nitronate monooxygenase (355 aa).

Residues Asn71, Gln175, Gly180, Gly218, and 237 to 240 (QMGT) contribute to the FMN site.

It belongs to the nitronate monooxygenase family. NMO class I subfamily. It depends on FMN as a cofactor.

The catalysed reaction is 3 propionate 3-nitronate + 3 O2 + H2O = 3 3-oxopropanoate + 2 nitrate + nitrite + H2O2 + 3 H(+). Functionally, nitronate monooxygenase that uses molecular oxygen to catalyze the oxidative denitrification of alkyl nitronates. Acts on propionate 3-nitronate (P3N), the presumed physiological substrate. Probably functions in the detoxification of P3N, a metabolic poison produced by plants and fungi as a defense mechanism. In Staphylococcus aureus (strain MRSA252), this protein is Probable nitronate monooxygenase.